The chain runs to 476 residues: MDAHSRFAPRLPGPAINPIVDNSDEPQPSLSDLHDFEPKLEFDDTELLAPSPLEKDVMVGDFVLAEDPELEPEEDVNPLEDDFEDQLREQSENFQTPRNKCDFLGTDKQGRHIFGIYASRFPEKSQLEGFVREIIKEIEPFVENDYILVYFHQGLKEDNKPSAQFLWNSYKELDRNFRKNLKTLYVVHPTWFIRVIWNFFSPFISDKFRKKLVYISSLDELRQALGLNKLKLPDNICDLDDKLNPSRKPSTPPPSSNINASRQQQHKMATTHQFGVPLKFIVMNSPCLNSIPPIVRKCVDSLSITGVIDTEGIFRRSGNHSEIMALKERVNRGEDVDLKSVNVHVIAGLLKSFLRDLAEPLLTFELYEDVTGFLDWPKEERSRNVTQLIREKLPEENYELFKYIVEFLVRVMDCEDLNKMTSSNLAIVFGPNFLWSRSTSTSLEEIAPINAFVDFVLQNHKDIYLIDVNQRTVSVD.

Disordered regions lie at residues 1-35 (MDAHSRFAPRLPGPAINPIVDNSDEPQPSLSDLHD) and 241-266 (DKLNPSRKPSTPPPSSNINASRQQQH). Phosphoserine is present on residues serine 29 and serine 31. The CRAL-TRIO domain maps to 91-244 (SENFQTPRNK…NICDLDDKLN (154 aa)). Threonine 251 carries the post-translational modification Phosphothreonine. Polar residues predominate over residues 257–266 (NINASRQQQH). In terms of domain architecture, Rho-GAP spans 276–464 (VPLKFIVMNS…FVLQNHKDIY (189 aa)).

In terms of biological role, functions as a GTPase-activating protein (GAP) for RhoA/Rho1 during gastrulation by converting it to an inactive GDP-bound state. The protein is Rho GTPase-activating protein 68F (RhoGAP68F) of Drosophila melanogaster (Fruit fly).